Consider the following 150-residue polypeptide: Protein-arginine-phosphatase (150 aa).

Cys7 functions as the Nucleophile in the catalytic mechanism. Substrate is bound at residue 8-13 (TGNTCR). Arg13 is a catalytic residue. Asp118 acts as the Proton donor/acceptor in catalysis.

This sequence belongs to the low molecular weight phosphotyrosine protein phosphatase family.

It carries out the reaction N(omega)-phospho-L-arginyl-[protein] + H2O = L-arginyl-[protein] + phosphate. Efficiently inhibited by Cu(2+) ion, Zn(2+) ion, sodium pyrophosphate and N-ethylmaleimide, while the addition of Mg(2+), Ca(2+) or Fe(3+) ions has minimal effect. Inhibited in a competitive manner by vanadate. In terms of biological role, catalyzes the specific dephosphorylation of phosphoarginine residues in a large number of proteins. Counteracts the protein arginine kinase McsB in vivo. Can dephosphorylate CtsR-P; thus, can restore the DNA-binding ability of the CtsR repressor by reversing the McsB-mediated phosphorylation. Is the only active pArg phosphatase present in B.subtilis. Exhibits almost no activity against pSer, pThr, or pTyr peptides. Appears to play a role in B.subtilis stress resistance. Protein arginine phosphorylation has a physiologically important role and is involved in the regulation of many critical cellular processes, such as protein homeostasis, motility, competence, and stringent and stress responses, by regulating gene expression and protein activity. In Bacillus subtilis (strain 168), this protein is Protein-arginine-phosphatase (ywlE).